The chain runs to 105 residues: Small ribosomal subunit protein uS10 (105 aa).

This sequence belongs to the universal ribosomal protein uS10 family. Part of the 30S ribosomal subunit.

Involved in the binding of tRNA to the ribosomes. The protein is Small ribosomal subunit protein uS10 of Rickettsia canadensis (strain McKiel).